A 144-amino-acid polypeptide reads, in one-letter code: Fluoride-specific ion channel FluC 1 (144 aa).

Helical transmembrane passes span 11–31 (LIYI…YYLG), 44–64 (LATL…TTYI), 74–94 (VITG…TFSV), and 107–127 (IAFL…GLGY). Residues Gly-84 and Thr-87 each coordinate Na(+).

This sequence belongs to the fluoride channel Fluc/FEX (TC 1.A.43) family.

Its subcellular location is the cell membrane. It catalyses the reaction fluoride(in) = fluoride(out). Its activity is regulated as follows. Na(+) is not transported, but it plays an essential structural role and its presence is essential for fluoride channel function. Functionally, fluoride-specific ion channel. Important for reducing fluoride concentration in the cell, thus reducing its toxicity. This chain is Fluoride-specific ion channel FluC 1, found in Bacillus cereus (strain ATCC 14579 / DSM 31 / CCUG 7414 / JCM 2152 / NBRC 15305 / NCIMB 9373 / NCTC 2599 / NRRL B-3711).